Here is a 240-residue protein sequence, read N- to C-terminus: 4-hydroxy-tetrahydrodipicolinate reductase (240 aa).

NAD(+)-binding positions include 79–81 (ATT) and 103–106 (SANM). Catalysis depends on H135, which acts as the Proton donor/acceptor. H136 serves as a coordination point for (S)-2,3,4,5-tetrahydrodipicolinate. The Proton donor role is filled by K139. 145–146 (GT) lines the (S)-2,3,4,5-tetrahydrodipicolinate pocket.

This sequence belongs to the DapB family.

The protein localises to the cytoplasm. It catalyses the reaction (S)-2,3,4,5-tetrahydrodipicolinate + NAD(+) + H2O = (2S,4S)-4-hydroxy-2,3,4,5-tetrahydrodipicolinate + NADH + H(+). The enzyme catalyses (S)-2,3,4,5-tetrahydrodipicolinate + NADP(+) + H2O = (2S,4S)-4-hydroxy-2,3,4,5-tetrahydrodipicolinate + NADPH + H(+). Its pathway is amino-acid biosynthesis; L-lysine biosynthesis via DAP pathway; (S)-tetrahydrodipicolinate from L-aspartate: step 4/4. In terms of biological role, catalyzes the conversion of 4-hydroxy-tetrahydrodipicolinate (HTPA) to tetrahydrodipicolinate. The chain is 4-hydroxy-tetrahydrodipicolinate reductase from Staphylococcus aureus (strain JH1).